A 472-amino-acid chain; its full sequence is 2-oxoisovalerate dehydrogenase subunit alpha 1, mitochondrial (472 aa).

A mitochondrion-targeting transit peptide spans 1 to 56 (MAIWFARSKTLVSSLRHNLNLSTILIKRDYSHRPIFYTTSQLSSTAYLSPFGSLRH). 185 to 187 (QYR) lines the thiamine diphosphate pocket. Positions 234, 239, and 240 each coordinate K(+).

Belongs to the BCKDHA family. Heterotetramer of alpha and beta chains. Requires thiamine diphosphate as cofactor.

Its subcellular location is the mitochondrion matrix. The catalysed reaction is N(6)-[(R)-lipoyl]-L-lysyl-[protein] + 3-methyl-2-oxobutanoate + H(+) = N(6)-[(R)-S(8)-2-methylpropanoyldihydrolipoyl]-L-lysyl-[protein] + CO2. Functionally, the branched-chain alpha-keto dehydrogenase complex catalyzes the overall conversion of alpha-keto acids to acyl-CoA and CO(2). It contains multiple copies of three enzymatic components: branched-chain alpha-keto acid decarboxylase (E1), lipoamide acyltransferase (E2) and lipoamide dehydrogenase (E3). Required during sugar starvation. This is 2-oxoisovalerate dehydrogenase subunit alpha 1, mitochondrial from Arabidopsis thaliana (Mouse-ear cress).